Here is a 246-residue protein sequence, read N- to C-terminus: 5-oxoprolinase subunit A (246 aa).

The protein belongs to the LamB/PxpA family. Forms a complex composed of PxpA, PxpB and PxpC.

The catalysed reaction is 5-oxo-L-proline + ATP + 2 H2O = L-glutamate + ADP + phosphate + H(+). In terms of biological role, catalyzes the cleavage of 5-oxoproline to form L-glutamate coupled to the hydrolysis of ATP to ADP and inorganic phosphate. The chain is 5-oxoprolinase subunit A from Cupriavidus metallidurans (strain ATCC 43123 / DSM 2839 / NBRC 102507 / CH34) (Ralstonia metallidurans).